The primary structure comprises 548 residues: Protein NRT1/ PTR FAMILY 2.4 (548 aa).

A run of 12 helical transmembrane segments spans residues 29 to 49, 65 to 85, 88 to 108, 136 to 156, 172 to 192, 200 to 220, 316 to 336, 354 to 374, 393 to 413, 429 to 449, 468 to 488, and 508 to 528; these read TLLG…VFLI, IVNG…DSFF, IPVI…LTLI, ILYA…FILA, FFNW…TAIV, WKLG…IFVA, LVPL…QMSM, VSAG…IILN, LQKV…SAVV, VLWL…HFPA, SLTS…IDVI, and YLVL…CSWF.

Belongs to the major facilitator superfamily. Proton-dependent oligopeptide transporter (POT/PTR) (TC 2.A.17) family. In terms of tissue distribution, strongly expressed in the root stele.

It localises to the membrane. Functionally, transporter involved in a passive nitrate efflux. The chain is Protein NRT1/ PTR FAMILY 2.4 (NPF2.4) from Arabidopsis thaliana (Mouse-ear cress).